Consider the following 352-residue polypeptide: Ion-translocating oxidoreductase complex subunit D (352 aa).

The next 4 membrane-spanning stretches (helical) occupy residues 20–40, 42–62, 69–91, and 123–143; these read IMLL…WFFG, GTLF…AIVL, VASH…SIPP, and PAMI…TSWL. Residue Thr-187 is modified to FMN phosphoryl threonine. Helical transmembrane passes span 215–235, 242–262, 267–287, 301–321, and 322–342; these read LAGV…VFLL, WHIP…GWLF, LASP…FFIL, LIFG…GGYP, and DGVA…DYYT.

The protein belongs to the NqrB/RnfD family. The complex is composed of six subunits: RsxA, RsxB, RsxC, RsxD, RsxE and RsxG. Requires FMN as cofactor.

It is found in the cell inner membrane. Its function is as follows. Part of a membrane-bound complex that couples electron transfer with translocation of ions across the membrane. Required to maintain the reduced state of SoxR. The polypeptide is Ion-translocating oxidoreductase complex subunit D (Salmonella typhi).